We begin with the raw amino-acid sequence, 617 residues long: Elongation factor 4 (617 aa).

The tr-type G domain maps to 17–198 (AIIRNFCIIA…KIVRDLPAPV (182 aa)). Residues 29-34 (DHGKST) and 145-148 (NKID) each bind GTP.

The protein belongs to the TRAFAC class translation factor GTPase superfamily. Classic translation factor GTPase family. LepA subfamily.

It is found in the cell membrane. It catalyses the reaction GTP + H2O = GDP + phosphate + H(+). Required for accurate and efficient protein synthesis under certain stress conditions. May act as a fidelity factor of the translation reaction, by catalyzing a one-codon backward translocation of tRNAs on improperly translocated ribosomes. Back-translocation proceeds from a post-translocation (POST) complex to a pre-translocation (PRE) complex, thus giving elongation factor G a second chance to translocate the tRNAs correctly. Binds to ribosomes in a GTP-dependent manner. The polypeptide is Elongation factor 4 (Arthrobacter sp. (strain FB24)).